The following is a 585-amino-acid chain: FAD-linked oxidoreductase apf9 (585 aa).

The N-terminal stretch at M1–A19 is a signal peptide. N-linked (GlcNAc...) asparagine glycosylation is found at N40, N92, and N117. The 187-residue stretch at I108–T294 folds into the FAD-binding PCMH-type domain. H145 is modified (pros-8alpha-FAD histidine). N-linked (GlcNAc...) asparagine glycosylation is found at N352, N412, and N495.

Belongs to the oxygen-dependent FAD-linked oxidoreductase family. FAD serves as cofactor.

Its pathway is secondary metabolite biosynthesis. FAD-linked oxidoreductase; part of the gene cluster that mediates the biosynthesis of the cyclic tetrapeptide apicidin F (APF). The non-ribosomal peptide synthetase apf1 incorporates four different amino acids to produce apicidin F: L-phenylalanine, D-pipecolic acid (D-pip), N-methoxy-L-tryptophan and L-2-aminooctanedioic acid. L-Phenylalanine is the only proteinogenic amino acid directly used by apf1. The 3 other apf1 substrates are non-proteinogenic and have to be modified by other enzymes of the cluster. Lysine is converted to delta-1-pyrroline-5-carboxylate (P5C) which is reduced to L-pipecolic acid (L-pip) by apf3. L-pip is epimerized to D-pip, probably by apf1 activity, prior to incorporation. L-Tryptophan is N-oxidyzed by one of the cytochrome P450 monooxygenases (apf7 or apf8), and further methylated at the hydroxy group by the O-methyltransferase apf6 to yield N-methoxy-L-tryptophan. The synthesis of the fourth apf1 substrate is more complex. The fatty acid synthase apf5 is involved in the synthesis of the octanoic acid backbone of L-2-aminooctanedioic acid by fixing one acetyl-CoA unit and three malonyl-CoA units. Then one of the cytochrome P450 monooxygenases (apf7 or apf8) may oxidize this backbone to 2-oxooctanoic acid. The aminotransferase apf4 is predicted to catalyze the exchange of the keto group with an amino group. The next step would be the oxidation of 2-aminooctanoic acid by one of the cytochrome P450 monooxygenases (apf7 or apf8). The last step is the oxidation of 2-amino-8-hydroxyoctanoic acid to 2-aminooctanedioic acid is catalyzed by the FAD-dependent monooxygenase apf9. The chain is FAD-linked oxidoreductase apf9 from Gibberella fujikuroi (strain CBS 195.34 / IMI 58289 / NRRL A-6831) (Bakanae and foot rot disease fungus).